The sequence spans 221 residues: 21 kDa seed protein (221 aa).

A signal peptide spans 1–26 (MKTATAVVLLLFAFTSKSYFFGVANA). Cysteine 69 and cysteine 116 are disulfide-bonded.

Belongs to the protease inhibitor I3 (leguminous Kunitz-type inhibitor) family.

The chain is 21 kDa seed protein (ASP) from Theobroma cacao (Cacao).